A 256-amino-acid chain; its full sequence is MKTLIVDDEPLARNELHYLLNEISGFNVIDEAENIEETLEKLLSETYDLVFLDINLMDESGIDLAQKIKKMKQPPHIIFATAHDTFAVKAFELDAIDYILKPFELERIEQAVNKVKHQISNSNEIDHITSEPSTLSMQQDDRQENEDQTVLPIEMNERIYVIRKDDITAVSVNNGITTINTTHRTYQTNEPLNYYEKKLSNNTFIKIHRATIINKTHIDSVEHWFNYTYQVTMTSGDKFQVSRSFMKAFKHEIGLA.

The Response regulatory domain occupies 2–116; that stretch reads KTLIVDDEPL…RIEQAVNKVK (115 aa). 4-aspartylphosphate is present on aspartate 53. The segment at 124 to 146 is disordered; it reads EIDHITSEPSTLSMQQDDRQENE. The HTH LytTR-type domain maps to 151 to 255; that stretch reads LPIEMNERIY…MKAFKHEIGL (105 aa).

Post-translationally, phosphorylated by LytS.

The protein localises to the cytoplasm. Functionally, member of the two-component regulatory system LytR/LytS that probably regulates genes involved in cell wall metabolism. The protein is Sensory transduction protein LytR (lytR) of Staphylococcus haemolyticus (strain JCSC1435).